Here is a 399-residue protein sequence, read N- to C-terminus: S-adenosylmethionine synthase (399 aa).

His-17 is a binding site for ATP. Asp-19 serves as a coordination point for Mg(2+). Glu-45 is a binding site for K(+). L-methionine-binding residues include Glu-58 and Gln-101. Residues Gln-101 to Gln-111 form a flexible loop region. Residues Asp-177–Lys-179, Arg-244–Phe-245, Asp-253, Arg-259–Lys-260, Ala-276, and Lys-280 each bind ATP. L-methionine is bound at residue Asp-253. L-methionine is bound at residue Lys-284.

The protein belongs to the AdoMet synthase family. Homotetramer; dimer of dimers. Requires Mg(2+) as cofactor. K(+) is required as a cofactor.

It is found in the cytoplasm. It catalyses the reaction L-methionine + ATP + H2O = S-adenosyl-L-methionine + phosphate + diphosphate. It participates in amino-acid biosynthesis; S-adenosyl-L-methionine biosynthesis; S-adenosyl-L-methionine from L-methionine: step 1/1. Catalyzes the formation of S-adenosylmethionine (AdoMet) from methionine and ATP. The overall synthetic reaction is composed of two sequential steps, AdoMet formation and the subsequent tripolyphosphate hydrolysis which occurs prior to release of AdoMet from the enzyme. This chain is S-adenosylmethionine synthase, found in Bacillus anthracis (strain A0248).